The primary structure comprises 139 residues: Nucleoside diphosphate kinase (139 aa).

ATP contacts are provided by Lys11, Phe59, Arg87, Thr93, Arg104, and Asn114. His117 (pros-phosphohistidine intermediate) is an active-site residue.

The protein belongs to the NDK family. Homotetramer. Mg(2+) serves as cofactor.

It localises to the cytoplasm. It carries out the reaction a 2'-deoxyribonucleoside 5'-diphosphate + ATP = a 2'-deoxyribonucleoside 5'-triphosphate + ADP. It catalyses the reaction a ribonucleoside 5'-diphosphate + ATP = a ribonucleoside 5'-triphosphate + ADP. Major role in the synthesis of nucleoside triphosphates other than ATP. The ATP gamma phosphate is transferred to the NDP beta phosphate via a ping-pong mechanism, using a phosphorylated active-site intermediate. The polypeptide is Nucleoside diphosphate kinase (Wolbachia sp. subsp. Brugia malayi (strain TRS)).